A 367-amino-acid chain; its full sequence is Homoserine O-acetyltransferase (367 aa).

The 299-residue stretch at 41 to 339 folds into the AB hydrolase-1 domain; that stretch reads NLIVLEHALT…PVGHDAFLTE (299 aa). Residue serine 136 is the Nucleophile of the active site. Residue arginine 205 coordinates substrate. Active-site residues include aspartate 303 and histidine 333. A substrate-binding site is contributed by aspartate 334.

Belongs to the AB hydrolase superfamily. MetX family. In terms of assembly, homodimer.

It localises to the cytoplasm. It carries out the reaction L-homoserine + acetyl-CoA = O-acetyl-L-homoserine + CoA. Its pathway is amino-acid biosynthesis; L-methionine biosynthesis via de novo pathway; O-acetyl-L-homoserine from L-homoserine: step 1/1. Transfers an acetyl group from acetyl-CoA to L-homoserine, forming acetyl-L-homoserine. In Corynebacterium diphtheriae (strain ATCC 700971 / NCTC 13129 / Biotype gravis), this protein is Homoserine O-acetyltransferase.